The following is a 457-amino-acid chain: CUB1 family protein C30C2.08 (457 aa).

Coiled coils occupy residues threonine 119 to lysine 174 and glutamine 418 to glutamate 448.

It belongs to the CUB1 family.

The protein resides in the cytoplasm. Its subcellular location is the nucleus. Involved in bleomycin tolerance with links to DNA repair and/or proteasome function. The polypeptide is CUB1 family protein C30C2.08 (Schizosaccharomyces pombe (strain 972 / ATCC 24843) (Fission yeast)).